The following is a 103-amino-acid chain: Large ribosomal subunit protein uL24 (103 aa).

It belongs to the universal ribosomal protein uL24 family. In terms of assembly, part of the 50S ribosomal subunit.

One of two assembly initiator proteins, it binds directly to the 5'-end of the 23S rRNA, where it nucleates assembly of the 50S subunit. In terms of biological role, one of the proteins that surrounds the polypeptide exit tunnel on the outside of the subunit. The sequence is that of Large ribosomal subunit protein uL24 from Syntrophomonas wolfei subsp. wolfei (strain DSM 2245B / Goettingen).